Reading from the N-terminus, the 111-residue chain is WAP four-disulfide core domain protein 12 (111 aa).

A signal peptide spans 1–23 (MGSSSFLVLMVSLALVTLVAAEG). Positions 27-74 (GIEKAGVCPADNIRCFKSDPPQCHTDQDCLGERKCCYLHCGFKCVIPV) constitute a WAP domain. Disulfide bonds link cysteine 34-cysteine 62, cysteine 41-cysteine 66, cysteine 49-cysteine 61, and cysteine 55-cysteine 70. Positions 80–111 (GGNKDEDVSGPCPEPGWEAKSPGSSSTGCPQK) are disordered. Polar residues predominate over residues 101 to 111 (PGSSSTGCPQK).

The protein localises to the secreted. Its function is as follows. Antibacterial protein. Putative acid-stable proteinase inhibitor. The chain is WAP four-disulfide core domain protein 12 (WFDC12) from Macaca mulatta (Rhesus macaque).